We begin with the raw amino-acid sequence, 68 residues long: Small ribosomal subunit protein bS21 (68 aa).

It belongs to the bacterial ribosomal protein bS21 family.

In Ruegeria sp. (strain TM1040) (Silicibacter sp.), this protein is Small ribosomal subunit protein bS21.